Reading from the N-terminus, the 236-residue chain is Uridylate kinase (236 aa).

Position 10–13 (10–13 (KLSG)) interacts with ATP. Position 52 (G52) interacts with UMP. The ATP site is built by G53 and R57. UMP-binding positions include D72 and 133–140 (TGNPFFTT). Residues T160, Y166, and D169 each coordinate ATP.

Belongs to the UMP kinase family. As to quaternary structure, homohexamer.

The protein localises to the cytoplasm. It carries out the reaction UMP + ATP = UDP + ADP. It functions in the pathway pyrimidine metabolism; CTP biosynthesis via de novo pathway; UDP from UMP (UMPK route): step 1/1. Inhibited by UTP. Its function is as follows. Catalyzes the reversible phosphorylation of UMP to UDP. This chain is Uridylate kinase, found in Polaromonas naphthalenivorans (strain CJ2).